The sequence spans 565 residues: Ubiquitin carboxyl-terminal hydrolase 21 (565 aa).

Basic and acidic residues predominate over residues Met1–Glu14. 3 disordered regions span residues Met1–Pro103, Ala109–Gly128, and Leu142–Phe163. Residues Ala42–Gly57 show a composition bias toward pro residues. Residues Pro58–Arg70 are compositionally biased toward basic and acidic residues. A compositionally biased stretch (low complexity) spans Gly71–Leu82. Residues Glu134 to Arg152 carry the Nuclear export signal motif. One can recognise a USP domain in the interval Val212–Met558. The Nucleophile role is filled by Cys221. Cys384, Cys387, Cys437, and Cys440 together coordinate Zn(2+). His518 (proton acceptor) is an active-site residue.

The protein belongs to the peptidase C19 family. USP21 subfamily. As to quaternary structure, interacts with BEND3.

It is found in the cytoplasm. It localises to the nucleus. It carries out the reaction Thiol-dependent hydrolysis of ester, thioester, amide, peptide and isopeptide bonds formed by the C-terminal Gly of ubiquitin (a 76-residue protein attached to proteins as an intracellular targeting signal).. Its function is as follows. Deubiquitinating enzyme that hydrolyzes 'Lys-6'- and 'Lys-11'-linked polyubiquitin. Also hydrolyzes heterotypic (mixed and branched) and homotypic chains. Important regulator of energy metabolism. Glucose and fatty acids trigger its nuclear translocation by CBP-dependent acetylation. In the nucleus, deubiquitinates and stabilizes the nuclear receptor PPARD regulating the expression of various genes involved in glucose and lipid metabolism and oxidative phosphorylation. Also acts as a negative regulator of the ribosome quality control (RQC) by mediating deubiquitination of 40S ribosomal proteins RPS10/eS10 and RPS20/uS10, thereby antagonizing ZNF598-mediated 40S ubiquitination. In Bos taurus (Bovine), this protein is Ubiquitin carboxyl-terminal hydrolase 21 (USP21).